The following is a 125-amino-acid chain: Glycine cleavage system H protein (125 aa).

The Lipoyl-binding domain maps to 21–103 (SVTIGISNQA…YSAGWIVKIK (83 aa)). An N6-lipoyllysine modification is found at Lys-62.

Belongs to the GcvH family. As to quaternary structure, the glycine cleavage system is composed of four proteins: P, T, L and H. Requires (R)-lipoate as cofactor.

Functionally, the glycine cleavage system catalyzes the degradation of glycine. The H protein shuttles the methylamine group of glycine from the P protein to the T protein. In Psychromonas ingrahamii (strain DSM 17664 / CCUG 51855 / 37), this protein is Glycine cleavage system H protein.